A 290-amino-acid chain; its full sequence is Succinate dehydrogenase [ubiquinone] iron-sulfur subunit, mitochondrial (290 aa).

A mitochondrion-targeting transit peptide spans Met1–Gly38. A 2Fe-2S ferredoxin-type domain is found at Lys50 to Met143. The [2Fe-2S] cluster site is built by Cys103, Cys108, Cys111, and Cys123. Residues Asp186–Tyr216 form the 4Fe-4S ferredoxin-type domain. Positions 196, 199, and 202 each coordinate [4Fe-4S] cluster. Cys206 provides a ligand contact to [3Fe-4S] cluster. Trp211 lines the a ubiquinone pocket. [3Fe-4S] cluster-binding residues include Cys253 and Cys259. Residue Cys263 coordinates [4Fe-4S] cluster.

The protein belongs to the succinate dehydrogenase/fumarate reductase iron-sulfur protein family. As to quaternary structure, component of complex II composed of four subunits: the flavoprotein (FP) SDHA, iron-sulfur protein (IP) SDHB, and a cytochrome b560 composed of SDHC and SDHD. The cofactor is [2Fe-2S] cluster. Requires [3Fe-4S] cluster as cofactor. [4Fe-4S] cluster serves as cofactor.

It is found in the mitochondrion inner membrane. The catalysed reaction is a quinone + succinate = fumarate + a quinol. The enzyme catalyses (R)-malate + a quinone = enol-oxaloacetate + a quinol. It catalyses the reaction (S)-malate + a quinone = enol-oxaloacetate + a quinol. It functions in the pathway carbohydrate metabolism; tricarboxylic acid cycle; fumarate from succinate (eukaryal route): step 1/1. Its activity is regulated as follows. Enol-oxaloacetate inhibits the succinate dehydrogenase activity. In terms of biological role, iron-sulfur protein (IP) subunit of the succinate dehydrogenase complex (mitochondrial respiratory chain complex II), responsible for transferring electrons from succinate to ubiquinone (coenzyme Q). SDH also oxidizes malate to the non-canonical enol form of oxaloacetate, enol-oxaloacetate. Enol-oxaloacetate, which is a potent inhibitor of the succinate dehydrogenase activity, is further isomerized into keto-oxaloacetate. The polypeptide is Succinate dehydrogenase [ubiquinone] iron-sulfur subunit, mitochondrial (SDHB) (Gallus gallus (Chicken)).